We begin with the raw amino-acid sequence, 285 residues long: Sulfur carrier protein TtuD (285 aa).

Rhodanese domains are found at residues 20–127 and 161–281; these read EDPK…PLTT and KEGK…VPIA. The residue at position 240 (C240) is a Cysteine persulfide.

Post-translationally, cys-240 can accept a sulfur atom as persulfide forms from cysteine desulfurases IscS and SufS.

The protein operates within tRNA modification. Required for the efficient 2-thiolation of 5-methyluridine residue at position 54 in the T loop of tRNAs, leading to 5-methyl-2-thiouridine (m(5)s(2)U or s(2)T). TtuD is a sulfur carrier protein that has a role to direct sulfur flow from cysteine desulfurases to m(5)s(2)U synthesis in vivo. It enhances the cysteine desulfurase activity of IscS and SufS, as well as the formation of thiocarboxylated TtuB (TtuB-COSH) in the presence of these desulfurases. The sequence is that of Sulfur carrier protein TtuD from Thermus thermophilus (strain ATCC BAA-163 / DSM 7039 / HB27).